The primary structure comprises 100 residues: Urease subunit gamma (100 aa).

The protein belongs to the urease gamma subunit family. Heterotrimer of UreA (gamma), UreB (beta) and UreC (alpha) subunits. Three heterotrimers associate to form the active enzyme.

It is found in the cytoplasm. It carries out the reaction urea + 2 H2O + H(+) = hydrogencarbonate + 2 NH4(+). It participates in nitrogen metabolism; urea degradation; CO(2) and NH(3) from urea (urease route): step 1/1. The polypeptide is Urease subunit gamma (Ralstonia nicotianae (strain ATCC BAA-1114 / GMI1000) (Ralstonia solanacearum)).